The chain runs to 376 residues: UDP-N-acetylglucosamine 2-epimerase (376 aa).

Substrate contacts are provided by residues arginine 10, lysine 15, aspartate 95, glutamate 117, histidine 213, glutamine 271, phenylalanine 276, serine 290 to glycine 292, glutamate 296, and arginine 313.

Belongs to the UDP-N-acetylglucosamine 2-epimerase family. In terms of assembly, homodimer.

It localises to the cytoplasm. The enzyme catalyses UDP-N-acetyl-alpha-D-glucosamine = UDP-N-acetyl-alpha-D-mannosamine. It participates in bacterial outer membrane biogenesis; enterobacterial common antigen biosynthesis. With respect to regulation, allosterically activated by its substrate, UDP-GlcNAc. Its function is as follows. Catalyzes the reversible epimerization at C-2 of UDP-N-acetylglucosamine (UDP-GlcNAc) and thereby provides bacteria with UDP-N-acetylmannosamine (UDP-ManNAc), the activated donor of ManNAc residues. Also involved in bacteriophage N4 adsorption. This is UDP-N-acetylglucosamine 2-epimerase from Escherichia coli (strain K12).